Reading from the N-terminus, the 184-residue chain is Ribosome-recycling factor (184 aa).

The segment at 141–161 is disordered; sequence KKNDKAISEDDQRKGQDDVQK.

This sequence belongs to the RRF family.

The protein resides in the cytoplasm. Responsible for the release of ribosomes from messenger RNA at the termination of protein biosynthesis. May increase the efficiency of translation by recycling ribosomes from one round of translation to another. The sequence is that of Ribosome-recycling factor from Solidesulfovibrio magneticus (strain ATCC 700980 / DSM 13731 / RS-1) (Desulfovibrio magneticus).